A 474-amino-acid polypeptide reads, in one-letter code: MSPNELTYLAILLGSAPLGFLFKNGSPQVKQRGSAAVGVALTLITCHIHSLHSAITILGTWLIIKILPRSCHFPTLGWTFTYLLFFRTITYFDIPAPTPFTNAVQLLLTLKLVSLANEVQDFYRAKKQEVTSFSKPSAISTIPSIPSLREMFYYSYCYIGLMTGPFYRYKTYYDWLHQIDPASIPSWKPLVSRLKPAPVFGVLFLIASQYFPLDYVKTDEFYEQAFLYRLFYMVPTFFIFRMRFYVAWIFAECGCISAAFGAYPVSAKSRSGGGPTVEYAPLERNAEGAKVELEYDYETIKNIDCYGADFCVKVKDGMRYWNMSVQWWLAQYIYKNSPVKSLVFGSAWTMLVSAYWHGIHPGYYMSFLTIPLCLAAEGSMEAGLRRHVSDSGKMIFDWVHWFLKMRAYDYMCMGFVLLTFTDTYRYWQSIYFSVHVLAISLFLLGRVLALKSPRRPRNTKEEKAEAKQENRLQE.

At 1-5 the chain is on the cytoplasmic side; sequence MSPNE. Residues 6 to 22 form a helical membrane-spanning segment; it reads LTYLAILLGSAPLGFLF. At 23–33 the chain is on the lumenal side; sequence KNGSPQVKQRG. A helical membrane pass occupies residues 34 to 57; it reads SAAVGVALTLITCHIHSLHSAITI. At 58–73 the chain is on the cytoplasmic side; sequence LGTWLIIKILPRSCHF. The helical transmembrane segment at 74-93 threads the bilayer; that stretch reads PTLGWTFTYLLFFRTITYFD. Over 94-193 the chain is Lumenal; it reads IPAPTPFTNA…IPSWKPLVSR (100 aa). Residues 194 to 211 traverse the membrane as a helical segment; sequence LKPAPVFGVLFLIASQYF. Topologically, residues 212-230 are cytoplasmic; it reads PLDYVKTDEFYEQAFLYRL. The chain crosses the membrane as a helical span at residues 231 to 260; it reads FYMVPTFFIFRMRFYVAWIFAECGCISAAF. Over 261–427 the chain is Lumenal; it reads GAYPVSAKSR…LTFTDTYRYW (167 aa). Asparagine 322 is a glycosylation site (N-linked (GlcNAc...) asparagine). The chain crosses the membrane as a helical span at residues 428-448; that stretch reads QSIYFSVHVLAISLFLLGRVL. Topologically, residues 449–473 are cytoplasmic; it reads ALKSPRRPRNTKEEKAEAKQENRLQ.

It belongs to the membrane-bound acyltransferase family.

It localises to the endoplasmic reticulum membrane. It carries out the reaction a 1-acyl-sn-glycero-3-phospho-(1D-myo-inositol) + (5Z,8Z,11Z,14Z)-eicosatetraenoyl-CoA = a 1-acyl-2-(5Z,8Z,11Z,14Z-eicosatetraenoyl)-sn-glycero-3-phospho-(1D-myo-inositol) + CoA. It catalyses the reaction (5Z,8Z,11Z,14Z)-eicosatetraenoyl-CoA + 1-hexadecanoyl-sn-glycero-3-phosphocholine = 1-hexadecanoyl-2-(5Z,8Z,11Z,14Z-eicosatetraenoyl)-sn-glycero-3-phosphocholine + CoA. The catalysed reaction is a 1-acyl-sn-glycero-3-phospho-(1D-myo-inositol) + an acyl-CoA = a 1,2-diacyl-sn-glycero-3-phospho-(1D-myo-inositol) + CoA. The enzyme catalyses 1-octadecanoyl-sn-glycero-3-phospho-(1D-myo-inositol) + (5Z,8Z,11Z,14Z)-eicosatetraenoyl-CoA = 1-octadecanoyl-2-(5Z,8Z,11Z,14Z-eicosatetraenoyl)-sn-glycero-3-phospho-(1D-myo-inositol) + CoA. The protein operates within lipid metabolism; phospholipid metabolism. In terms of biological role, acyltransferase which catalyzes the transfer of an acyl group from an acyl-CoA to a lysophosphatidylinositol (1-acylglycerophosphatidylinositol or LPI) leading to the production of a phosphatidylinositol (1,2-diacyl-sn-glycero-3-phosphoinositol or PI) and participates in the reacylation step of the phospholipid remodeling pathway also known as the Lands cycle. Prefers arachidonoyl-CoA as the acyl donor, thus contributing to the regulation of free levels arachidonic acid in cell. The chain is Membrane-bound acylglycerophosphatidylinositol O-acyltransferase mboat7 (mboat7) from Xenopus laevis (African clawed frog).